The following is a 107-amino-acid chain: U1-lycotoxin-Ls1f (107 aa).

The first 20 residues, 1-20 (MMKVLVVVALLVTLISYSSS), serve as a signal peptide directing secretion. The propeptide occupies 21-41 (EGIDDLEADELLSLMANEQTR). Cystine bridges form between Cys44-Cys59, Cys51-Cys68, Cys58-Cys86, and Cys70-Cys84.

This sequence belongs to the neurotoxin 19 (CSTX) family. 04 (U1-Lctx) subfamily. In terms of tissue distribution, expressed by the venom gland.

Its subcellular location is the secreted. This is U1-lycotoxin-Ls1f from Lycosa singoriensis (Wolf spider).